Reading from the N-terminus, the 506-residue chain is Anaerobic nitric oxide reductase transcription regulator NorR (506 aa).

A 4-aspartylphosphate modification is found at aspartate 57. Positions 187–416 (MIGLSPNMMQ…LEHAIHRAVV (230 aa)) constitute a Sigma-54 factor interaction domain. ATP-binding positions include 215-222 (GETGTGKE) and 278-287 (ADNGTLFLDE). The H-T-H motif DNA-binding region spans 481-500 (WAACARALETDVANLHRLAK).

It participates in nitrogen metabolism; nitric oxide reduction. Functionally, required for the expression of anaerobic nitric oxide (NO) reductase, acts as a transcriptional activator for at least the norVW operon. Activation also requires sigma-54. This chain is Anaerobic nitric oxide reductase transcription regulator NorR, found in Citrobacter koseri (strain ATCC BAA-895 / CDC 4225-83 / SGSC4696).